We begin with the raw amino-acid sequence, 954 residues long: Glycine dehydrogenase (decarboxylating) (954 aa).

Lys-704 is modified (N6-(pyridoxal phosphate)lysine).

It belongs to the GcvP family. In terms of assembly, the glycine cleavage system is composed of four proteins: P, T, L and H. Requires pyridoxal 5'-phosphate as cofactor.

It carries out the reaction N(6)-[(R)-lipoyl]-L-lysyl-[glycine-cleavage complex H protein] + glycine + H(+) = N(6)-[(R)-S(8)-aminomethyldihydrolipoyl]-L-lysyl-[glycine-cleavage complex H protein] + CO2. Functionally, the glycine cleavage system catalyzes the degradation of glycine. The P protein binds the alpha-amino group of glycine through its pyridoxal phosphate cofactor; CO(2) is released and the remaining methylamine moiety is then transferred to the lipoamide cofactor of the H protein. This is Glycine dehydrogenase (decarboxylating) from Vibrio vulnificus (strain CMCP6).